A 242-amino-acid chain; its full sequence is DNA repair protein RecO (242 aa).

This sequence belongs to the RecO family.

In terms of biological role, involved in DNA repair and RecF pathway recombination. This chain is DNA repair protein RecO, found in Nitrosospira multiformis (strain ATCC 25196 / NCIMB 11849 / C 71).